Here is a 450-residue protein sequence, read N- to C-terminus: Phosphoglucosamine mutase (450 aa).

The active-site Phosphoserine intermediate is serine 101. Positions 101, 241, 243, and 245 each coordinate Mg(2+). Residue serine 101 is modified to Phosphoserine.

The protein belongs to the phosphohexose mutase family. It depends on Mg(2+) as a cofactor. In terms of processing, activated by phosphorylation.

It catalyses the reaction alpha-D-glucosamine 1-phosphate = D-glucosamine 6-phosphate. Catalyzes the conversion of glucosamine-6-phosphate to glucosamine-1-phosphate. The chain is Phosphoglucosamine mutase from Ligilactobacillus salivarius (strain UCC118) (Lactobacillus salivarius).